The primary structure comprises 37 residues: Photosystem I reaction center subunit VIII (37 aa).

A helical transmembrane segment spans residues I10–Y30.

The protein belongs to the PsaI family.

Its subcellular location is the plastid. It is found in the chloroplast thylakoid membrane. May help in the organization of the PsaL subunit. This chain is Photosystem I reaction center subunit VIII, found in Gossypium barbadense (Sea Island cotton).